Reading from the N-terminus, the 260-residue chain is Ribonuclease PH (260 aa).

Phosphate-binding positions include Arg-88 and 126-128 (GTR).

This sequence belongs to the RNase PH family. Homohexameric ring arranged as a trimer of dimers.

The enzyme catalyses tRNA(n+1) + phosphate = tRNA(n) + a ribonucleoside 5'-diphosphate. Functionally, phosphorolytic 3'-5' exoribonuclease that plays an important role in tRNA 3'-end maturation. Removes nucleotide residues following the 3'-CCA terminus of tRNAs; can also add nucleotides to the ends of RNA molecules by using nucleoside diphosphates as substrates, but this may not be physiologically important. Probably plays a role in initiation of 16S rRNA degradation (leading to ribosome degradation) during starvation. The polypeptide is Ribonuclease PH (Mycolicibacterium gilvum (strain PYR-GCK) (Mycobacterium gilvum (strain PYR-GCK))).